The following is a 222-amino-acid chain: UPF0128 protein PYRAB08320 (222 aa).

It belongs to the UPF0128 family.

The protein is UPF0128 protein PYRAB08320 of Pyrococcus abyssi (strain GE5 / Orsay).